The primary structure comprises 292 residues: Phosphatidylglycerol--prolipoprotein diacylglyceryl transferase (292 aa).

A run of 3 helical transmembrane segments spans residues 18-38 (LFGV…GLLI), 67-87 (LLTW…VLFY), and 105-125 (GGMS…AFCL). Arg-150 serves as a coordination point for a 1,2-diacyl-sn-glycero-3-phospho-(1'-sn-glycerol). 3 helical membrane passes run 193-213 (QIYE…LLVW), 222-242 (GSVS…VEFV), and 266-286 (GLTM…YLIL).

It belongs to the Lgt family.

It is found in the cell inner membrane. The enzyme catalyses L-cysteinyl-[prolipoprotein] + a 1,2-diacyl-sn-glycero-3-phospho-(1'-sn-glycerol) = an S-1,2-diacyl-sn-glyceryl-L-cysteinyl-[prolipoprotein] + sn-glycerol 1-phosphate + H(+). The protein operates within protein modification; lipoprotein biosynthesis (diacylglyceryl transfer). Functionally, catalyzes the transfer of the diacylglyceryl group from phosphatidylglycerol to the sulfhydryl group of the N-terminal cysteine of a prolipoprotein, the first step in the formation of mature lipoproteins. The sequence is that of Phosphatidylglycerol--prolipoprotein diacylglyceryl transferase from Cereibacter sphaeroides (strain ATCC 17029 / ATH 2.4.9) (Rhodobacter sphaeroides).